The primary structure comprises 671 residues: UvrABC system protein C (671 aa).

The 80-residue stretch at 16-95 (VEPGVYRFRD…IKEFDPRFNV (80 aa)) folds into the GIY-YIG domain. The 36-residue stretch at 208–243 (DRLARDMEREMNQAAQELNFERAARLRDNISALQRA) folds into the UVR domain. The segment at 645–671 (SSAPSSGATEAVLPAMVENGVDDTPST) is disordered.

It belongs to the UvrC family. As to quaternary structure, interacts with UvrB in an incision complex.

It localises to the cytoplasm. Functionally, the UvrABC repair system catalyzes the recognition and processing of DNA lesions. UvrC both incises the 5' and 3' sides of the lesion. The N-terminal half is responsible for the 3' incision and the C-terminal half is responsible for the 5' incision. The sequence is that of UvrABC system protein C from Mycobacteroides abscessus (strain ATCC 19977 / DSM 44196 / CCUG 20993 / CIP 104536 / JCM 13569 / NCTC 13031 / TMC 1543 / L948) (Mycobacterium abscessus).